The sequence spans 83 residues: Erabutoxin b (83 aa).

The first 21 residues, 1-21, serve as a signal peptide directing secretion; sequence MKTLLLTLVVVTIVCLDLGYT. The tract at residues 24-38 is loop I; it reads CFNHQSSQPQTTKTC. 4 cysteine pairs are disulfide-bonded: cysteine 24–cysteine 45, cysteine 38–cysteine 62, cysteine 64–cysteine 75, and cysteine 76–cysteine 81. Residues 39–44 are stretch between loop I and loop II; the sequence is SPGESS. A loop II region spans residues 45-62; it reads CYHKQWSDFRGTIIERGC. The segment at 64 to 75 is loop III; the sequence is CPTVKPGIKLSC.

The protein belongs to the three-finger toxin family. Short-chain subfamily. Type I alpha-neurotoxin sub-subfamily. As to expression, expressed by the venom gland.

It is found in the secreted. Functionally, binds with high affinity to muscular nicotinic acetylcholine receptors (nAChRs) (tested on Torpedo marmorata, Kd=0.07 nM), and with low affinity to neuronal alpha-7/CHRNA7 nAChRs (tested on chimeric alpha-7/CHRNA7, Kd=22 uM) and inhibit acetylcholine from binding to the receptor, thereby impairing neuromuscular transmission. Produces peripheral paralysis by blocking neuromuscular transmission at the postsynaptic site. The sequence is that of Erabutoxin b from Laticauda semifasciata (Black-banded sea krait).